Here is a 396-residue protein sequence, read N- to C-terminus: NADH-quinone oxidoreductase subunit D (396 aa).

Belongs to the complex I 49 kDa subunit family. In terms of assembly, NDH-1 is composed of 14 different subunits. Subunits NuoB, C, D, E, F, and G constitute the peripheral sector of the complex.

The protein localises to the cell inner membrane. The catalysed reaction is a quinone + NADH + 5 H(+)(in) = a quinol + NAD(+) + 4 H(+)(out). NDH-1 shuttles electrons from NADH, via FMN and iron-sulfur (Fe-S) centers, to quinones in the respiratory chain. The immediate electron acceptor for the enzyme in this species is believed to be ubiquinone. Couples the redox reaction to proton translocation (for every two electrons transferred, four hydrogen ions are translocated across the cytoplasmic membrane), and thus conserves the redox energy in a proton gradient. The polypeptide is NADH-quinone oxidoreductase subunit D (Brucella suis biovar 1 (strain 1330)).